The primary structure comprises 163 residues: uncharacterized protein (163 aa).

This is an uncharacterized protein from Rickettsia conorii (strain ATCC VR-613 / Malish 7).